Here is a 972-residue protein sequence, read N- to C-terminus: POM121-like protein 2 (972 aa).

Disordered regions lie at residues 1–67, 281–302, 328–359, 406–431, 676–726, and 953–972; these read MGSY…PANP, LKKAGESPNSHLSVTPSSSGQL, TEEDPTLEGQAVPSNQTTEATTGTAGDSIPEM, GISSDSNPSIASTQASPSSPTTPVTD, LGLS…AIDG, and SKTLRNREPGRSRKHHTYKK. The span at 40-57 shows a compositional bias: basic residues; the sequence is RVQHVHRAQPARRHRPAR. Composition is skewed to polar residues over residues 287-302 and 339-352; these read SPNSHLSVTPSSSGQL and VPSNQTTEATTGTA. Low complexity predominate over residues 413–431; the sequence is PSIASTQASPSSPTTPVTD. The segment covering 677–696 has biased composition (polar residues); the sequence is GLSSTNQPPVTSSNSNVTSA. Residues 697–706 show a composition bias toward low complexity; that stretch reads LTSSLGSSPK.

This sequence belongs to the POM121 family.

This is POM121-like protein 2 (Pom121l2) from Mus musculus (Mouse).